The following is a 178-amino-acid chain: Ribulose bisphosphate carboxylase small subunit, chloroplastic (178 aa).

Residues 1–54 (MASSMISSPAVTTVNRAGAGTVAPFTGLKSMAGFPTRKTNNDIASIASNGGRVQ) constitute a chloroplast transit peptide.

The protein belongs to the RuBisCO small chain family. As to quaternary structure, heterohexadecamer of 8 large and 8 small subunits.

The protein resides in the plastid. The protein localises to the chloroplast. Its function is as follows. RuBisCO catalyzes two reactions: the carboxylation of D-ribulose 1,5-bisphosphate, the primary event in carbon dioxide fixation, as well as the oxidative fragmentation of the pentose substrate. Both reactions occur simultaneously and in competition at the same active site. Although the small subunit is not catalytic it is essential for maximal activity. The protein is Ribulose bisphosphate carboxylase small subunit, chloroplastic of Glycine tabacina.